The following is a 323-amino-acid chain: uncharacterized protein (323 aa).

Its subcellular location is the mitochondrion. This is an uncharacterized protein from Schizosaccharomyces pombe (strain 972 / ATCC 24843) (Fission yeast).